Consider the following 392-residue polypeptide: Succinate--CoA ligase [ADP-forming] subunit beta (392 aa).

An ATP-grasp domain is found at 9-248; the sequence is KDILRKFGVA…ISEEDPFEVE (240 aa). ATP contacts are provided by residues lysine 50, 57–59, glutamate 103, methionine 106, and glutamate 111; that span reads GRG. Mg(2+) contacts are provided by asparagine 203 and aspartate 217. Residues asparagine 268 and 325-327 contribute to the substrate site; that span reads GIV.

The protein belongs to the succinate/malate CoA ligase beta subunit family. Heterotetramer of two alpha and two beta subunits. Requires Mg(2+) as cofactor.

It carries out the reaction succinate + ATP + CoA = succinyl-CoA + ADP + phosphate. The enzyme catalyses GTP + succinate + CoA = succinyl-CoA + GDP + phosphate. It functions in the pathway carbohydrate metabolism; tricarboxylic acid cycle; succinate from succinyl-CoA (ligase route): step 1/1. Its function is as follows. Succinyl-CoA synthetase functions in the citric acid cycle (TCA), coupling the hydrolysis of succinyl-CoA to the synthesis of either ATP or GTP and thus represents the only step of substrate-level phosphorylation in the TCA. The beta subunit provides nucleotide specificity of the enzyme and binds the substrate succinate, while the binding sites for coenzyme A and phosphate are found in the alpha subunit. This is Succinate--CoA ligase [ADP-forming] subunit beta from Chlorobium phaeobacteroides (strain DSM 266 / SMG 266 / 2430).